Reading from the N-terminus, the 297-residue chain is MTHASALGLTQHIPDTQSERDERHLAIQRVGVKEVRYPLTVRIGEQLSPTVASWSLDVALPAEQKGTHMSRFVAWLDALSASGKPLDATALRDELAVMLDKLHAVEGRIEARFPFFIRKHAPVSGVSSLLDYQGAWIAEHRAGSGTTVWCEVVVPVKSLCPCSKEISDYGAHNQRSHVTIRAELMEPPGDRRRPPPPGGGESTRERPVVDSAVELGFEALVRFAEASASSEIWGLLKRPDEKWITERAYENPKFVEDLVRDVALRLNADARIGRYRVEVENFESIHNHSAFAVIERE.

2 disordered regions span residues 1-21 (MTHA…SERD) and 180-207 (IRAE…RERP).

It belongs to the GTP cyclohydrolase IV family.

The catalysed reaction is GTP + H2O = 7,8-dihydroneopterin 3'-triphosphate + formate + H(+). The protein operates within cofactor biosynthesis; 7,8-dihydroneopterin triphosphate biosynthesis; 7,8-dihydroneopterin triphosphate from GTP: step 1/1. In terms of biological role, converts GTP to 7,8-dihydroneopterin triphosphate. This is GTP cyclohydrolase FolE2 from Methylibium petroleiphilum (strain ATCC BAA-1232 / LMG 22953 / PM1).